The following is a 514-amino-acid chain: MFRSMGTGTGTKPPAMTTERYEFGPLVGEGNFAKVYLGRHRATGEEVAIKVMDKEKLVRLGATELIKREIAVMQRLRHPNVVRIHEVMANKRRICVVMEYVRGGALYRYFRRGPSGGAAGLREHEARRFFQQLVSAVAYCHSRGVFHRDIKLDNLLVDEQGNLKVADFGLSALADMERREAHLQTVCGTPLFLAPEVFKRRGYDGAKADVWACGVVLYVLLTGRKPFPDEHVSRLYRLIGQNQFQCPPSFSPDLARLVRRLLQPDPDRRITIPEIMEMRWFKRGFKEVTYYIDSNDRLRSLDGLDGEPELYDSDTDTIESSSSSESPTPVAGTPRGMHTSVSAPALSELDRMEDSASLPLPLPLPPRPRMPRPKSLNAFDIIASSPSFDLSGLFEERGERMRFVSGAPVADIIAKLQEIAGMVSFTARTKDCQVSIEATRNGQKGALAISAKVFELTRELVMVQVCKKAGDTAEYRRFCDNELKAGLRGLVVDALPPPVEGGGHGGAAAAAEAE.

A Protein kinase domain is found at 21–281; the sequence is YEFGPLVGEG…IPEIMEMRWF (261 aa). ATP-binding positions include 27–35 and K50; that span reads VGEGNFAKV. Residue D149 is the Proton acceptor of the active site. Residues 167–196 are activation loop; it reads DFGLSALADMERREAHLQTVCGTPLFLAPE. The segment at 303 to 340 is disordered; sequence GLDGEPELYDSDTDTIESSSSSESPTPVAGTPRGMHTS. Over residues 304–317 the composition is skewed to acidic residues; that stretch reads LDGEPELYDSDTDT. Positions 318–329 are enriched in low complexity; the sequence is IESSSSSESPTP. The NAF domain maps to 323-395; it reads SSESPTPVAG…PSFDLSGLFE (73 aa). A PPI region spans residues 398 to 427; sequence GERMRFVSGAPVADIIAKLQEIAGMVSFTA.

This sequence belongs to the protein kinase superfamily. CAMK Ser/Thr protein kinase family. SNF1 subfamily. Mn(2+) serves as cofactor.

The enzyme catalyses L-seryl-[protein] + ATP = O-phospho-L-seryl-[protein] + ADP + H(+). It carries out the reaction L-threonyl-[protein] + ATP = O-phospho-L-threonyl-[protein] + ADP + H(+). Functionally, CIPK serine-threonine protein kinases interact with CBL proteins. Binding of a CBL protein to the regulatory NAF domain of CIPK protein lead to the activation of the kinase in a calcium-dependent manner. The protein is CBL-interacting protein kinase 25 (CIPK25) of Oryza sativa subsp. japonica (Rice).